The following is a 362-amino-acid chain: NAD(P)H-quinone oxidoreductase subunit 1, chloroplastic (362 aa).

8 helical membrane-spanning segments follow: residues 29–49 (ILPILTLLLGITIEVLVIVWL), 103–123 (IAVISILLSFLVIPLGYHFVL), 128–148 (IGVFLWIAISSIAPIGLLMAG), 164–184 (AAQSISYEIPLTFCVLAISLL), 202–222 (FFGWNIWRQPIGFLVFLISSL), 247–267 (YSGIKYGLFYLVSYLNLLVSS), 303–323 (TIGIFITLTKAYLFLFISITI), and 335–355 (LLNLGWKFLLPISLGNLLLTT).

It belongs to the complex I subunit 1 family. NDH is composed of at least 16 different subunits, 5 of which are encoded in the nucleus.

The protein localises to the plastid. It is found in the chloroplast thylakoid membrane. It carries out the reaction a plastoquinone + NADH + (n+1) H(+)(in) = a plastoquinol + NAD(+) + n H(+)(out). It catalyses the reaction a plastoquinone + NADPH + (n+1) H(+)(in) = a plastoquinol + NADP(+) + n H(+)(out). Functionally, NDH shuttles electrons from NAD(P)H:plastoquinone, via FMN and iron-sulfur (Fe-S) centers, to quinones in the photosynthetic chain and possibly in a chloroplast respiratory chain. The immediate electron acceptor for the enzyme in this species is believed to be plastoquinone. Couples the redox reaction to proton translocation, and thus conserves the redox energy in a proton gradient. This is NAD(P)H-quinone oxidoreductase subunit 1, chloroplastic from Agrostis stolonifera (Creeping bentgrass).